Here is a 314-residue protein sequence, read N- to C-terminus: 4-hydroxyproline 2-epimerase (314 aa).

The Proton acceptor role is filled by cysteine 88. Substrate-binding positions include 89–90 (GH), histidine 208, and aspartate 232. The Proton donor role is filled by cysteine 236. 237-238 (GT) is a substrate binding site.

This sequence belongs to the proline racemase family. As to quaternary structure, homodimer.

It catalyses the reaction trans-4-hydroxy-L-proline = cis-4-hydroxy-D-proline. Its activity is regulated as follows. Inhibited by iodoacetate, iodoacetamide and by high amounts (10 mM) of pyrrole-2-carboxylate (PYC). Not inhibited by PYC at 1 mM. Allows intracellular utilization of 4-hydroxyproline, one of the major constituents of host collagen, by converting trans-4-hydroxy-L-proline (t4LHyp) to cis-4-hydroxy-D-proline (c4DHyp), which can be further metabolized by intracellular 4-hydroxy-D-proline oxidases. Strong B-cell mitogen. Plays an important role in the regulation of intra- and extracellular amino acid pools, allowing the bacterium to profit from host precursors and enzymatic pathways. Cannot use L-proline, trans-3-hydroxy-L-proline (t3LHyp) and pyrrolidone-5-carboxylate (P5C) as substrate. In Pseudomonas aeruginosa (strain ATCC 15692 / DSM 22644 / CIP 104116 / JCM 14847 / LMG 12228 / 1C / PRS 101 / PAO1), this protein is 4-hydroxyproline 2-epimerase.